A 202-amino-acid chain; its full sequence is MTYTLPELPYAYDALEPYIDVETMHLHHDKHHNTYVTNLNAAIEKHPELGEKSVENLISDMNAIPEDIRTAVRNNGGGHANHTFFWEIMAPNAGGQPTGAIKEAIDETFGSFDEMKAAFKTAATGRFGSGWAWLVVNNGKLEITSTPNQDSPLMDGQTPVLGLDVWEHAYYLKYKNVRPDYIEAFWNVVNWDKVNELFAAAK.

Residues His-27, His-82, Asp-164, and His-168 each coordinate Fe cation.

It belongs to the iron/manganese superoxide dismutase family. In terms of assembly, homodimer. Requires Fe cation as cofactor.

It catalyses the reaction 2 superoxide + 2 H(+) = H2O2 + O2. In terms of biological role, destroys superoxide anion radicals which are normally produced within the cells and which are toxic to biological systems. The sequence is that of Superoxide dismutase [Fe] (sodA) from Enterococcus faecalis (strain ATCC 700802 / V583).